Consider the following 465-residue polypeptide: Cysteine--tRNA ligase (465 aa).

Cysteine 29 lines the Zn(2+) pocket. A 'HIGH' region motif is present at residues 31-41 (PTVYNYIHIGN). Zn(2+)-binding residues include cysteine 209, histidine 234, and glutamate 238. Positions 266–270 (KMSKS) match the 'KMSKS' region motif. Position 269 (lysine 269) interacts with ATP. Serine 270 is modified (phosphoserine).

This sequence belongs to the class-I aminoacyl-tRNA synthetase family. Monomer. The cofactor is Zn(2+).

Its subcellular location is the cytoplasm. It carries out the reaction tRNA(Cys) + L-cysteine + ATP = L-cysteinyl-tRNA(Cys) + AMP + diphosphate. In Bacillus cereus (strain AH187), this protein is Cysteine--tRNA ligase.